Here is a 116-residue protein sequence, read N- to C-terminus: Orphan antitoxin YagB (116 aa).

The protein belongs to the CbeA/YafW/YfjZ antitoxin family.

Functionally, putative antitoxin component of a type IV toxin-antitoxin (TA) system; its cognate toxin is unknown. The sequence is that of Orphan antitoxin YagB (yagB) from Escherichia coli (strain K12).